A 963-amino-acid chain; its full sequence is Low-density lipoprotein receptor-related protein 8 (963 aa).

The signal sequence occupies residues 1 to 32; the sequence is MGLPEPGPLRLLALLLLLLLLLLLQLQHLAAA. At 42-826 the chain is on the extracellular side; sequence GPAKDCEKDQ…SKMGSTVTAA (785 aa). LDL-receptor class A domains lie at 46-82, 85-123, 126-164, 166-202, 205-246, 258-295, and 298-334; these read DCEKDQFQCRNERCIPSVWRCDEDDDCLDHSDEDDCP, TCADSDFTCDNGHCIHERWKCDGEEECPDGSDESEATCT, VCPAEKLSCGPTSHKCVPASWRCDGEKDCEGGADEAGCA, LCAPHEFQCGNRSCLAAVFVCDGDDDCGDGSDERGCA, ACGP…ELCG, ACATASQFACRSGECVHLGWRCDGDRDCKDKSDEADCP, and TCRGDEFQCGDGTCVLAIKHCNQEQDCPDGSDEAGCL. 27 disulfide bridges follow: cysteine 47-cysteine 59, cysteine 54-cysteine 72, cysteine 66-cysteine 81, cysteine 86-cysteine 98, cysteine 93-cysteine 111, cysteine 105-cysteine 122, cysteine 127-cysteine 141, cysteine 134-cysteine 154, cysteine 148-cysteine 163, cysteine 167-cysteine 179, cysteine 174-cysteine 192, cysteine 186-cysteine 201, cysteine 206-cysteine 221, cysteine 213-cysteine 234, cysteine 228-cysteine 245, cysteine 259-cysteine 272, cysteine 267-cysteine 285, cysteine 279-cysteine 294, cysteine 299-cysteine 311, cysteine 306-cysteine 324, cysteine 318-cysteine 333, cysteine 340-cysteine 351, cysteine 347-cysteine 360, cysteine 362-cysteine 374, cysteine 380-cysteine 390, cysteine 386-cysteine 399, and cysteine 401-cysteine 414. Ca(2+) contacts are provided by tryptophan 64, aspartate 67, aspartate 69, aspartate 71, aspartate 77, and glutamate 78. N-linked (GlcNAc...) asparagine glycosylation occurs at asparagine 176. Residues 336-375 form the EGF-like 1 domain; it reads GLNECLHNNGGCSHICTDLKIGFECTCPAGFQLLDQKTCG. Residues 376 to 415 form the EGF-like 2; calcium-binding domain; that stretch reads DIDECKDPDACSQICVNYKGYFKCECYPGYEMDLLTKNCK. A glycan (N-linked (GlcNAc...) asparagine) is linked at asparagine 441. 5 LDL-receptor class B repeats span residues 462–508, 509–551, 552–595, 596–639, and 640–681; these read NRIY…DWVH, KHIY…DPLR, GFMY…DLLS, QRLY…VFED, and KVFW…FHEL. N-linked (GlcNAc...) asparagine glycosylation is found at asparagine 518 and asparagine 538. A clustered O-linked oligosaccharides region spans residues 740-798; that stretch reads STSTTTLASTMTRTVPATTRAPGTTVHRSTYQNHSTETPSLTAAVPSSVSVPRAPSISP. A disordered region spans residues 754-815; that stretch reads VPATTRAPGT…SNHSQHYANE (62 aa). The segment covering 765-777 has biased composition (polar residues); sequence VHRSTYQNHSTET. Asparagine 772 is a glycosylation site (N-linked (GlcNAc...) asparagine). Over residues 778-799 the composition is skewed to low complexity; that stretch reads PSLTAAVPSSVSVPRAPSISPS. Residues 800–812 are compositionally biased toward polar residues; sequence TLSPATSNHSQHY. N-linked (GlcNAc...) asparagine glycosylation is present at asparagine 807. The helical transmembrane segment at 827 to 847 threads the bilayer; it reads VIGIIVPIVVIALLCMSGYLI. Topologically, residues 848 to 963 are cytoplasmic; it reads WRNWKRKNTK…ALSLEDDGLP (116 aa).

Belongs to the LDLR family. As to quaternary structure, homooligomer. Interacts with VLDLR. Reelin associates with two or more receptor molecules. Interacts with DAB1 and JNK-interacting proteins. Interacts with SNX17. Interacts with PCSK9. Interacts with MDK; this interaction is calcium dependent. Interacts with CLU. (Microbial infection) Interacts with Semliki Forest virus E2-E1 heterodimer; this interaction mediates viral entry to host cell. In terms of assembly, (Microbial infection) Interacts (via class A repeats) with Eastern equine encephalitis virus spike glycoprotein E2; this interaction mediates viral entry into host cell. Post-translationally, O-glycosylated. Some alternatively spliced isoforms lack the O-linked sugar domain. Undergoes sequential, furin and gamma-secretase dependent, proteolytic processing, resulting in the extracellular release of the entire ligand-binding domain as a soluble polypeptide and in the intracellular domain (ICD) release into the cytoplasm. The gamma-secretase-dependent proteolytical processing occurs after the bulk of the extracellular domain has been shed, in a furin-dependent manner, in alternatively spliced isoforms carrying the furin cleavage site. Hypoglycosylation (mainly hypo-O-glycosylation) leads to increased extracellular cleavage, which in turn results in accelerating release of the intracellular domain (ICD) by the gamma-secretase. The resulting receptor fragment is able to inhibit Reelin signaling and in particular the Reelin-induced DAB1 phosphorylation. In terms of processing, tyrosine phosphorylated upon apoE binding. Post-translationally, ubiquitinated by MYLIP leading to degradation. As to expression, expressed mainly in brain and placenta. Also expressed in platelets and megakaryocytic cells. Not expressed in the liver.

The protein resides in the cell membrane. It is found in the secreted. Cell surface receptor for Reelin (RELN) and apolipoprotein E (apoE)-containing ligands. LRP8 participates in transmitting the extracellular Reelin signal to intracellular signaling processes, by binding to DAB1 on its cytoplasmic tail. Reelin acts via both the VLDL receptor (VLDLR) and LRP8 to regulate DAB1 tyrosine phosphorylation and microtubule function in neurons. LRP8 has higher affinity for Reelin than VLDLR. LRP8 is thus a key component of the Reelin pathway which governs neuronal layering of the forebrain during embryonic brain development. Binds the endoplasmic reticulum resident receptor-associated protein (RAP). Binds dimers of beta 2-glycoprotein I and may be involved in the suppression of platelet aggregation in the vasculature. Highly expressed in the initial segment of the epididymis, where it affects the functional expression of clusterin and phospholipid hydroperoxide glutathione peroxidase (PHGPx), two proteins required for sperm maturation. May also function as an endocytic receptor. Not required for endocytic uptake of SEPP1 in the kidney which is mediated by LRP2. Together with its ligand, apolipoprotein E (apoE), may indirectly play a role in the suppression of the innate immune response by controlling the survival of myeloid-derived suppressor cells. In terms of biological role, (Microbial infection) Acts as a receptor for Semliki Forest virus. The sequence is that of Low-density lipoprotein receptor-related protein 8 (LRP8) from Homo sapiens (Human).